The following is a 212-amino-acid chain: Stromal cell-derived factor 2-like protein (212 aa).

A signal peptide spans 1–19; the sequence is MKSLFLILILCITIPLIFA. Asparagine 20 carries an N-linked (GlcNAc...) asparagine glycan. MIR domains lie at 29-86, 94-149, and 151-206; these read ITKV…IKGP, GTVV…VETE, and GKEW…TEEG.

Its subcellular location is the secreted. In Dictyostelium discoideum (Social amoeba), this protein is Stromal cell-derived factor 2-like protein.